Consider the following 283-residue polypeptide: Large ribosomal subunit protein uL2 (283 aa).

Disordered regions lie at residues 1–59 (MSIK…GGHK) and 222–283 (RGVA…TGGQ).

This sequence belongs to the universal ribosomal protein uL2 family. As to quaternary structure, part of the 50S ribosomal subunit. Forms a bridge to the 30S subunit in the 70S ribosome.

Functionally, one of the primary rRNA binding proteins. Required for association of the 30S and 50S subunits to form the 70S ribosome, for tRNA binding and peptide bond formation. It has been suggested to have peptidyltransferase activity; this is somewhat controversial. Makes several contacts with the 16S rRNA in the 70S ribosome. The chain is Large ribosomal subunit protein uL2 from Salinibacter ruber (strain DSM 13855 / M31).